The primary structure comprises 1015 residues: Transposase for transposon Tn3 (1015 aa).

Belongs to the transposase 7 family.

Its function is as follows. Required for transposition of transposon Tn3. The sequence is that of Transposase for transposon Tn3 (tnpA) from Escherichia coli.